The chain runs to 304 residues: ATP synthase gamma chain (304 aa).

Belongs to the ATPase gamma chain family. F-type ATPases have 2 components, CF(1) - the catalytic core - and CF(0) - the membrane proton channel. CF(1) has five subunits: alpha(3), beta(3), gamma(1), delta(1), epsilon(1). CF(0) has three main subunits: a, b and c.

The protein localises to the cell membrane. Its function is as follows. Produces ATP from ADP in the presence of a proton gradient across the membrane. The gamma chain is believed to be important in regulating ATPase activity and the flow of protons through the CF(0) complex. The chain is ATP synthase gamma chain from Mycolicibacterium paratuberculosis (strain ATCC BAA-968 / K-10) (Mycobacterium paratuberculosis).